Consider the following 89-residue polypeptide: Small ribosomal subunit protein uS14 (89 aa).

The protein belongs to the universal ribosomal protein uS14 family. As to quaternary structure, part of the 30S ribosomal subunit. Contacts proteins S3 and S10.

In terms of biological role, binds 16S rRNA, required for the assembly of 30S particles and may also be responsible for determining the conformation of the 16S rRNA at the A site. The sequence is that of Small ribosomal subunit protein uS14 from Parabacteroides distasonis (strain ATCC 8503 / DSM 20701 / CIP 104284 / JCM 5825 / NCTC 11152).